The following is a 95-amino-acid chain: uncharacterized protein (95 aa).

The stretch at Lys14–Ile50 forms a coiled coil.

This is an uncharacterized protein from Bacillus subtilis (strain 168).